We begin with the raw amino-acid sequence, 214 residues long: 3-demethoxyubiquinol 3-hydroxylase (214 aa).

Fe cation is bound by residues glutamate 63, glutamate 93, histidine 96, glutamate 145, glutamate 177, and histidine 180.

This sequence belongs to the COQ7 family. Fe cation is required as a cofactor.

The protein localises to the cell membrane. The enzyme catalyses a 5-methoxy-2-methyl-3-(all-trans-polyprenyl)benzene-1,4-diol + AH2 + O2 = a 3-demethylubiquinol + A + H2O. It functions in the pathway cofactor biosynthesis; ubiquinone biosynthesis. Functionally, catalyzes the hydroxylation of 2-nonaprenyl-3-methyl-6-methoxy-1,4-benzoquinol during ubiquinone biosynthesis. This is 3-demethoxyubiquinol 3-hydroxylase from Psychrobacter cryohalolentis (strain ATCC BAA-1226 / DSM 17306 / VKM B-2378 / K5).